A 551-amino-acid chain; its full sequence is Eukaryotic translation initiation factor 3 subunit D-2 (551 aa).

Residues 108–152 (RARGRTGRGNATLGGLGGPVAGGSTANSTKYGKGRNTRNAQNMGR) form a disordered region. A compositionally biased stretch (gly residues) spans 119-128 (TLGGLGGPVA). The tract at residues 290–304 (QFDLLTVNETSLEPP) is RNA gate. The segment at 530–551 (AFDSDGDDESESSEPFGNSIDN) is disordered. Residues 531–541 (FDSDGDDESES) are compositionally biased toward acidic residues.

Belongs to the eIF-3 subunit D family. Component of the eukaryotic translation initiation factor 3 (eIF-3) complex. The eIF-3 complex interacts with pix.

The protein resides in the cytoplasm. MRNA cap-binding component of the eukaryotic translation initiation factor 3 (eIF-3) complex, which is involved in protein synthesis of a specialized repertoire of mRNAs and, together with other initiation factors, stimulates binding of mRNA and methionyl-tRNAi to the 40S ribosome. The eIF-3 complex specifically targets and initiates translation of a subset of mRNAs involved in cell proliferation. In the eIF-3 complex, eif3d specifically recognizes and binds the 7-methylguanosine cap of a subset of mRNAs. This is Eukaryotic translation initiation factor 3 subunit D-2 from Drosophila yakuba (Fruit fly).